The chain runs to 274 residues: Eukaryotic translation initiation factor 3 subunit J (274 aa).

2 disordered regions span residues 1-120 (MSGK…DLKH) and 227-246 (EEKAAEKGGKKSKAAKTKTS). A compositionally biased stretch (acidic residues) spans 30–50 (DEEGNESDVLDSWDAAEDSEV). Residues 46–112 (EDSEVEREKA…AERRERLRRE (67 aa)) adopt a coiled-coil conformation. Composition is skewed to basic and acidic residues over residues 51–67 (EREKAKKAAEAKAKAEA) and 79–92 (RIAERQAERARQLA). Over residues 93–102 (EDSDAEEETE) the composition is skewed to acidic residues. The span at 103-120 (AERRERLRREQKESDLKH) shows a compositional bias: basic and acidic residues.

It belongs to the eIF-3 subunit J family. In terms of assembly, component of the eukaryotic translation initiation factor 3 (eIF-3) complex.

Its subcellular location is the cytoplasm. Component of the eukaryotic translation initiation factor 3 (eIF-3) complex, which is involved in protein synthesis of a specialized repertoire of mRNAs and, together with other initiation factors, stimulates binding of mRNA and methionyl-tRNAi to the 40S ribosome. The eIF-3 complex specifically targets and initiates translation of a subset of mRNAs involved in cell proliferation. The polypeptide is Eukaryotic translation initiation factor 3 subunit J (hcr-1) (Neurospora crassa (strain ATCC 24698 / 74-OR23-1A / CBS 708.71 / DSM 1257 / FGSC 987)).